Reading from the N-terminus, the 564-residue chain is Keratin, type II cytoskeletal 6A (564 aa).

Low complexity predominate over residues 1–11 (MASTSTTIRSH). The segment at 1 to 23 (MASTSTTIRSHSSSRRGFSANSA) is disordered. At Ala-2 the chain carries N-acetylalanine. The head stretch occupies residues 2 to 162 (ASTSTTIRSH…DPTIQRVRAE (161 aa)). A coil 1A region spans residues 163-198 (EREQIKTLNNKFASFIDKVRFLEQQNKVLETKWTLL). Residues 163–476 (EREQIKTLNN…KLLEGEECRL (314 aa)) form the IF rod domain. The linker 1 stretch occupies residues 199–217 (QEQGTKTVRQNLEPLFEQY). The coil 1B stretch occupies residues 218–309 (INNLRRQLDS…ALYDAELSQM (92 aa)). Residues 310-333 (QTHISDTSVVLSMDNNRNLDLDSI) are linker 12. The segment at 334 to 472 (IAEVKAQYEE…ATYRKLLEGE (139 aa)) is coil 2. The tract at residues 473–564 (ECRLNGEGVG…SSSSRKSYKH (92 aa)) is tail.

The protein belongs to the intermediate filament family. As to quaternary structure, heterodimer of a type I and a type II keratin. KRT6 isomers associate with KRT16 and/or KRT17. Interacts with TCHP. Expressed in the corneal epithelium (at protein level).

In terms of biological role, epidermis-specific type I keratin involved in wound healing. Involved in the activation of follicular keratinocytes after wounding, while it does not play a major role in keratinocyte proliferation or migration. Participates in the regulation of epithelial migration by inhibiting the activity of SRC during wound repair. In Homo sapiens (Human), this protein is Keratin, type II cytoskeletal 6A (KRT6A).